We begin with the raw amino-acid sequence, 436 residues long: Glutamate-1-semialdehyde 2,1-aminomutase (436 aa).

Lys272 carries the N6-(pyridoxal phosphate)lysine modification.

Belongs to the class-III pyridoxal-phosphate-dependent aminotransferase family. HemL subfamily. Homodimer. It depends on pyridoxal 5'-phosphate as a cofactor.

The protein localises to the cytoplasm. It carries out the reaction (S)-4-amino-5-oxopentanoate = 5-aminolevulinate. Its pathway is porphyrin-containing compound metabolism; protoporphyrin-IX biosynthesis; 5-aminolevulinate from L-glutamyl-tRNA(Glu): step 2/2. The protein operates within porphyrin-containing compound metabolism; chlorophyll biosynthesis. The protein is Glutamate-1-semialdehyde 2,1-aminomutase of Methylibium petroleiphilum (strain ATCC BAA-1232 / LMG 22953 / PM1).